The sequence spans 439 residues: MELGAAARAWSLLWLLLPLLGLVGASGPRTLVLLDNLNLRETHSLFFRSLKDRGFVLTFKTADDPSLSLIKYGEFLYDNLIVFSPSVEDFGGNINVETISTFIDGGGSVLVAASSDIGDPLRELGSECGIEFDEEKTAVIDHHNYDVSDLAQHTLIVADTENLLKAPTIVGKSSLNPILFRGVGMVADPDNPLVLDILTGSSTSYSFFPDKPITQYPHAVGKNTLLIAGLQARNNARVIFSGSLDFFSDAFFNSAVQKATPGSQRYPQTGNYELAVALSRWVFKEEGVLRVGPVSHHRVGEKAPPNAYTVTDLVEYSIVIEQLSEGRWVPFDGDDIQLEFVRIDPFVRTFLKRKGGKYSVQFKFPDVYGVFQFKVDYNRLGYTHLYSSTQVSVRPLQHTQYERFIPSAYPYYASAFSMMVGLFIFSVVFLHMKEKEKSD.

An N-terminal signal peptide occupies residues 1 to 25; the sequence is MELGAAARAWSLLWLLLPLLGLVGA. Residues 27-410 are Lumenal-facing; the sequence is GPRTLVLLDN…YERFIPSAYP (384 aa). The chain crosses the membrane as a helical span at residues 411 to 430; that stretch reads YYASAFSMMVGLFIFSVVFL. The Cytoplasmic segment spans residues 431 to 439; sequence HMKEKEKSD.

It belongs to the DDOST 48 kDa subunit family. Component of the oligosaccharyltransferase (OST) complex. OST exists in two different complex forms which contain common core subunits RPN1, RPN2, OST48, OST4, DAD1 and TMEM258, either STT3A or STT3B as catalytic subunits, and form-specific accessory subunits. STT3A complex assembly occurs through the formation of 3 subcomplexes. Subcomplex 1 contains RPN1 and TMEM258, subcomplex 2 contains the STT3A-specific subunits STT3A, DC2/OSTC, and KCP2 as well as the core subunit OST4, and subcomplex 3 contains RPN2, DAD1, and OST48. The STT3A complex can form stable complexes with the Sec61 complex or with both the Sec61 and TRAP complexes. Interacts with SMIM22.

The protein resides in the endoplasmic reticulum membrane. Its pathway is protein modification; protein glycosylation. Functionally, subunit of the oligosaccharyl transferase (OST) complex that catalyzes the initial transfer of a defined glycan (Glc(3)Man(9)GlcNAc(2) in eukaryotes) from the lipid carrier dolichol-pyrophosphate to an asparagine residue within an Asn-X-Ser/Thr consensus motif in nascent polypeptide chains, the first step in protein N-glycosylation. N-glycosylation occurs cotranslationally and the complex associates with the Sec61 complex at the channel-forming translocon complex that mediates protein translocation across the endoplasmic reticulum (ER). All subunits are required for a maximal enzyme activity. Required for the assembly of both SST3A- and SS3B-containing OST complexes. This Sus scrofa (Pig) protein is Dolichyl-diphosphooligosaccharide--protein glycosyltransferase 48 kDa subunit.